The sequence spans 149 residues: Calmodulin (149 aa).

4 consecutive EF-hand domains span residues 8-43, 44-79, 81-116, and 117-149; these read EQISEFKEAFSLFDKDGDGTITTKELGTVMRSLGQN, PTEAELQDMINEVDQDGSGTIDFPEFLTLMARKMQD, DSEEEIKEAFRVFDKDGNGFISAAELRHIMTNLGEK, and LTDEEVDEMIREADVDGDGQINYEEFVKMMMSK. Ca(2+)-binding residues include aspartate 21, aspartate 23, aspartate 25, threonine 27, glutamate 32, aspartate 57, aspartate 59, serine 61, threonine 63, glutamate 68, aspartate 94, aspartate 96, asparagine 98, and glutamate 105. The residue at position 116 (lysine 116) is an N6,N6,N6-trimethyllysine. Ca(2+) is bound by residues aspartate 130, aspartate 132, aspartate 134, glutamine 136, and glutamate 141.

The protein belongs to the calmodulin family.

Its function is as follows. Calmodulin mediates the control of a large number of enzymes, ion channels and other proteins by Ca(2+). Among the enzymes to be stimulated by the calmodulin-Ca(2+) complex are a number of protein kinases and phosphatases. The polypeptide is Calmodulin (Trypanosoma brucei brucei).